Here is a 510-residue protein sequence, read N- to C-terminus: ATP synthase subunit alpha (510 aa).

Residue 171-178 (GDRQTGKT) participates in ATP binding.

The protein belongs to the ATPase alpha/beta chains family. As to quaternary structure, F-type ATPases have 2 components, CF(1) - the catalytic core - and CF(0) - the membrane proton channel. CF(1) has five subunits: alpha(3), beta(3), gamma(1), delta(1), epsilon(1). CF(0) has three main subunits: a(1), b(2) and c(9-12). The alpha and beta chains form an alternating ring which encloses part of the gamma chain. CF(1) is attached to CF(0) by a central stalk formed by the gamma and epsilon chains, while a peripheral stalk is formed by the delta and b chains.

It localises to the cell inner membrane. The enzyme catalyses ATP + H2O + 4 H(+)(in) = ADP + phosphate + 5 H(+)(out). Its function is as follows. Produces ATP from ADP in the presence of a proton gradient across the membrane. The alpha chain is a regulatory subunit. This chain is ATP synthase subunit alpha, found in Phenylobacterium zucineum (strain HLK1).